Here is a 252-residue protein sequence, read N- to C-terminus: uncharacterized protein (252 aa).

The protein localises to the plastid. Its subcellular location is the chloroplast. This is an uncharacterized protein from Guillardia theta (Cryptophyte).